A 318-amino-acid chain; its full sequence is Cytochrome f (318 aa).

An N-terminal signal peptide occupies residues 1–34; the sequence is MQNRNFFEYPKNWIILLIPIFTTFNLLFTSDCYA. 4 residues coordinate heme: Phe35, Cys55, Cys58, and His59. A helical membrane pass occupies residues 284-303; sequence LQGLLVFLFLVVLAQVFLVL.

This sequence belongs to the cytochrome f family. In terms of assembly, the 4 large subunits of the cytochrome b6-f complex are cytochrome b6, subunit IV (17 kDa polypeptide, petD), cytochrome f and the Rieske protein, while the 4 small subunits are PetG, PetL, PetM and PetN. The complex functions as a dimer. Heme serves as cofactor.

It localises to the plastid. It is found in the chloroplast thylakoid membrane. Component of the cytochrome b6-f complex, which mediates electron transfer between photosystem II (PSII) and photosystem I (PSI), cyclic electron flow around PSI, and state transitions. The polypeptide is Cytochrome f (Chaetosphaeridium globosum (Charophycean green alga)).